A 904-amino-acid polypeptide reads, in one-letter code: Transcription factor E2F7 (904 aa).

Residues 61–80 are disordered; the sequence is TPDRNPITPVKPVDRQPQVE. Ser96 is modified (phosphoserine). A DNA-binding region spans residues 143–212; that stretch reads RKQKSLGLLC…VAKNQYGWHG (70 aa). A compositionally biased stretch (basic and acidic residues) spans 252-269; sequence GERRKDGSPDPRDPHLLD. The tract at residues 252-283 is disordered; sequence GERRKDGSPDPRDPHLLDFSEADYPSSSANSR. The DNA-binding element occupies 283–368; that stretch reads RKDKSLRIMS…GRKPAFKWIG (86 aa). Ser411 bears the Phosphoserine mark. The segment at 560 to 628 is disordered; the sequence is LSPESRSEED…VMPKKPSSST (69 aa). Ser833 is subject to Phosphoserine. The disordered stretch occupies residues 846-904; sequence AEQSPAPATPKSIQRRHRETFFKTPGSLGDPVFRRKERNQSRNTSSAQRRLEISSSGPD. Over residues 886 to 904 the composition is skewed to polar residues; it reads SRNTSSAQRRLEISSSGPD.

This sequence belongs to the E2F/DP family. As to quaternary structure, interacts with HIF1A. Homodimer and heterodimer: mainly forms homodimers and, to a lesser extent, heterodimers with E2F8. Dimerization is important for DNA-binding. Interacts with MN1. Widely expressed with highest levels in skin and thymus and very low levels in brain, muscle and stomach. Expressed in trophoblast giant cells throughout placenta development (at protein level).

It is found in the nucleus. In terms of biological role, atypical E2F transcription factor that participates in various processes such as angiogenesis, polyploidization of specialized cells and DNA damage response. Mainly acts as a transcription repressor that binds DNA independently of DP proteins and specifically recognizes the E2 recognition site 5'-TTTC[CG]CGC-3'. Directly represses transcription of classical E2F transcription factors such as E2F1. Acts as a regulator of S-phase by recognizing and binding the E2-related site 5'-TTCCCGCC-3' and mediating repression of G1/S-regulated genes. Plays a key role in polyploidization of cells in placenta and liver by regulating the endocycle, probably by repressing genes promoting cytokinesis and antagonizing action of classical E2F proteins (E2F1, E2F2 and/or E2F3). Required for placental development by promoting polyploidization of trophoblast giant cells. Also involved in DNA damage response: up-regulated by p53/TP53 following genotoxic stress and acts as a downstream effector of p53/TP53-dependent repression by mediating repression of indirect p53/TP53 target genes involved in DNA replication. Acts as a promoter of sprouting angiogenesis, possibly by acting as a transcription activator: associates with HIF1A, recognizes and binds the VEGFA promoter, which is different from canonical E2 recognition site, and activates expression of the VEGFA gene. Acts as a negative regulator of keratinocyte differentiation. In Mus musculus (Mouse), this protein is Transcription factor E2F7 (E2f7).